The chain runs to 150 residues: 3-dehydroquinate dehydratase (150 aa).

The active-site Proton acceptor is the Tyr-26. Substrate is bound by residues Asn-77, His-83, and Asp-90. The Proton donor role is filled by His-103. Substrate-binding positions include Leu-104–Ser-105 and Arg-114.

The protein belongs to the type-II 3-dehydroquinase family. In terms of assembly, homododecamer.

The catalysed reaction is 3-dehydroquinate = 3-dehydroshikimate + H2O. It functions in the pathway metabolic intermediate biosynthesis; chorismate biosynthesis; chorismate from D-erythrose 4-phosphate and phosphoenolpyruvate: step 3/7. In terms of biological role, catalyzes a trans-dehydration via an enolate intermediate. The protein is 3-dehydroquinate dehydratase of Erwinia tasmaniensis (strain DSM 17950 / CFBP 7177 / CIP 109463 / NCPPB 4357 / Et1/99).